The primary structure comprises 476 residues: MKVSLPAFEKARVLVVGDVMLDRYWVGPTGRISPEAPVPVVKINQVEDRPGGAANVALNIATLGGQVQLAGLVGQDDTAHALTLGVQTLGVEPQWLTIADKPTITKLRVLSRNQQLIRLDFEEAFDKADSVRLLKQSEALLDSVDVVVLSDYAKGAIDQPRDFIALARAKGVMVLVDPKGSDFGRYQGASLITPNMSEFEAVVGTVTSEADLLEKARGLLKQHNFDAILVTRSEKGMTLVTANAPELHIPTVAREVYDVTGAGDTVISALATSLAAGADLPQACAIANTAAGVVVGKLGTSTVSRIELIEALALHHGESGFGVVSEDQLAYALEQAKLRGERVVMTNGCFDILHAGHVSYLKQAKALGDRLIVAVNDDASVKRLKGDGRPVNQVDRRMAVLAGLASVDWVVPFSEDTPQRIITRLLPNLLVKGGDYKLEDIAGGAEVIAAGGQVQVLGFEDGFSTTAIIQNIMANQ.

The segment at 1–319 (MKVSLPAFEK…EALALHHGES (319 aa)) is ribokinase. 195-198 (NMSE) is a binding site for ATP. D264 is a catalytic residue. The tract at residues 345-476 (MTNGCFDILH…AIIQNIMANQ (132 aa)) is cytidylyltransferase.

In the N-terminal section; belongs to the carbohydrate kinase PfkB family. The protein in the C-terminal section; belongs to the cytidylyltransferase family. Homodimer.

It carries out the reaction D-glycero-beta-D-manno-heptose 7-phosphate + ATP = D-glycero-beta-D-manno-heptose 1,7-bisphosphate + ADP + H(+). The enzyme catalyses D-glycero-beta-D-manno-heptose 1-phosphate + ATP + H(+) = ADP-D-glycero-beta-D-manno-heptose + diphosphate. The protein operates within nucleotide-sugar biosynthesis; ADP-L-glycero-beta-D-manno-heptose biosynthesis; ADP-L-glycero-beta-D-manno-heptose from D-glycero-beta-D-manno-heptose 7-phosphate: step 1/4. It functions in the pathway nucleotide-sugar biosynthesis; ADP-L-glycero-beta-D-manno-heptose biosynthesis; ADP-L-glycero-beta-D-manno-heptose from D-glycero-beta-D-manno-heptose 7-phosphate: step 3/4. Catalyzes the phosphorylation of D-glycero-D-manno-heptose 7-phosphate at the C-1 position to selectively form D-glycero-beta-D-manno-heptose-1,7-bisphosphate. Its function is as follows. Catalyzes the ADP transfer from ATP to D-glycero-beta-D-manno-heptose 1-phosphate, yielding ADP-D-glycero-beta-D-manno-heptose. The chain is Bifunctional protein HldE from Shewanella baltica (strain OS185).